We begin with the raw amino-acid sequence, 660 residues long: MKAVIFAYHDMGCQGVQAVLDAGYEIAAIFTHADNPAENTFFGSVSRLAAGLGIPVYAPDNVNHPIWIDRIAELAPDIIFSFYYRNLLSEEILHLAPAGAFNLHGSLLPAYRGRAPLNWVLVNGESETGVTLHRMVKRADAGEIVASQRVAIAQDDVALTLHHKLCQAARQLLNSILPTMKCGDIPSVPQRESDATYYGRRRPEDGLIDWHKPVSTVHNLVRAVAAPWPGAFSYNGSQKFTIWSSRICPDAQGALPGSVISVSPLRVACADGALEIITGQAGDGITVQGSQLAQTLGLVAGARLNRPPATSGKRRIRVLILGVNGFIGNHLTERLLNEENYEVYGMDIGSNAISRFLLHPRFHFVEGDISIHSEWIEYHVKKCDVVLPLVAIATPIEYTRNPLRVFELDFEENLRIIRYCVKYRKRVVFPSTSEVYGMCTDASFDEDKSNLIVGPVNKPRWIYSVSKQLLDRVIWAYGEKEGLRFTLFRPFNWMGPRLDSLNAARIGSSRAITQLILNLVEGTPIKLIDGGQQKRCFTDIRDGIEALFRIIVNDGDRCDGKIINIGNPDNEASIQELATLLLDSFDKHPLRCHFPPFAGFQVVESRSYYGKGYQDVAHRKPSIDNARRCLGWEPSIAMRDTVEETLDFFLRSVDVAERAS.

The segment at 1 to 304 (MKAVIFAYHD…TLGLVAGARL (304 aa)) is formyltransferase ArnAFT. Residue H104 is the Proton donor; for formyltransferase activity of the active site. Residues R114 and 136-140 (VKRAD) contribute to the (6R)-10-formyltetrahydrofolate site. The tract at residues 314–660 (RRIRVLILGV…RSVDVAERAS (347 aa)) is dehydrogenase ArnADH. NAD(+) is bound by residues D347 and 368–369 (DI). UDP-alpha-D-glucuronate contacts are provided by residues A393, Y398, and 432–433 (TS). Catalysis depends on E434, which acts as the Proton acceptor; for decarboxylase activity. UDP-alpha-D-glucuronate contacts are provided by residues R460, N492, 526–535 (KLIDGGQQKR), and Y613. R619 (proton donor; for decarboxylase activity) is an active-site residue.

The protein in the N-terminal section; belongs to the Fmt family. UDP-L-Ara4N formyltransferase subfamily. In the C-terminal section; belongs to the NAD(P)-dependent epimerase/dehydratase family. UDP-glucuronic acid decarboxylase subfamily. Homohexamer, formed by a dimer of trimers.

The enzyme catalyses UDP-alpha-D-glucuronate + NAD(+) = UDP-beta-L-threo-pentopyranos-4-ulose + CO2 + NADH. It catalyses the reaction UDP-4-amino-4-deoxy-beta-L-arabinose + (6R)-10-formyltetrahydrofolate = UDP-4-deoxy-4-formamido-beta-L-arabinose + (6S)-5,6,7,8-tetrahydrofolate + H(+). It functions in the pathway nucleotide-sugar biosynthesis; UDP-4-deoxy-4-formamido-beta-L-arabinose biosynthesis; UDP-4-deoxy-4-formamido-beta-L-arabinose from UDP-alpha-D-glucuronate: step 1/3. Its pathway is nucleotide-sugar biosynthesis; UDP-4-deoxy-4-formamido-beta-L-arabinose biosynthesis; UDP-4-deoxy-4-formamido-beta-L-arabinose from UDP-alpha-D-glucuronate: step 3/3. The protein operates within bacterial outer membrane biogenesis; lipopolysaccharide biosynthesis. Its function is as follows. Bifunctional enzyme that catalyzes the oxidative decarboxylation of UDP-glucuronic acid (UDP-GlcUA) to UDP-4-keto-arabinose (UDP-Ara4O) and the addition of a formyl group to UDP-4-amino-4-deoxy-L-arabinose (UDP-L-Ara4N) to form UDP-L-4-formamido-arabinose (UDP-L-Ara4FN). The modified arabinose is attached to lipid A and is required for resistance to polymyxin and cationic antimicrobial peptides. This is Bifunctional polymyxin resistance protein ArnA from Salmonella heidelberg (strain SL476).